A 346-amino-acid chain; its full sequence is Pheromone receptor 2 (346 aa).

A run of 7 helical transmembrane segments spans residues 8–28 (VSFG…CLIH), 34–54 (IGVL…GINA), 71–94 (LSAI…LQRL), 115–135 (LIDF…FFIV), 160–180 (FIYH…AVLV), 219–239 (VLVS…GGLL), and 270–290 (LSIL…FFGL).

This sequence belongs to the G-protein coupled receptor 4 family.

It localises to the membrane. In terms of biological role, receptor for the A1 pheromone, a prenylated mating factor. This is Pheromone receptor 2 (PRA2) from Mycosarcoma maydis (Corn smut fungus).